The primary structure comprises 103 residues: Transcriptional regulator WhiB7 (103 aa).

[4Fe-4S] cluster is bound by residues cysteine 17, cysteine 49, cysteine 52, and cysteine 58. The 58-residue stretch at 25–82 folds into the 4Fe-4S Wbl-type domain; it reads PCHVGDPDLWFAENPGDLERAKALCAGCPIRVQCLTAALERQEPWGVWGGEILDRGSI. The interval 82–103 is disordered; sequence IVARKRPRGRPRKDSGGNPAAA.

Belongs to the WhiB family. The cofactor is [4Fe-4S] cluster. Post-translationally, the Fe-S cluster can be nitrosylated by nitric oxide (NO). Upon Fe-S cluster removal intramolecular disulfide bonds are formed.

Its subcellular location is the cytoplasm. Functionally, acts as a transcriptional regulator. Probably redox-responsive. The apo- but not holo-form probably binds DNA. Participates in maintaining a reduced cytoplasmic (MSH/MSSM) environment under normal growth conditions and directly or indirectly controls the concentration of mycothiol (MSH + MSSM). The protein is Transcriptional regulator WhiB7 (whiB7) of Mycolicibacterium smegmatis (strain ATCC 700084 / mc(2)155) (Mycobacterium smegmatis).